Here is a 306-residue protein sequence, read N- to C-terminus: Protein STPG3 (306 aa).

Positions 210–230 (CSYTPLLPTSKPSGEKRPSPN) are disordered.

This is Protein STPG3 from Mus musculus (Mouse).